The following is a 190-amino-acid chain: Thymidylate kinase (190 aa).

ATP is bound at residue 7–14 (GVDTCGKS).

This sequence belongs to the thymidylate kinase family.

The catalysed reaction is dTMP + ATP = dTDP + ADP. In terms of biological role, phosphorylation of dTMP to form dTDP in both de novo and salvage pathways of dTTP synthesis. The protein is Thymidylate kinase of Wolinella succinogenes (strain ATCC 29543 / DSM 1740 / CCUG 13145 / JCM 31913 / LMG 7466 / NCTC 11488 / FDC 602W) (Vibrio succinogenes).